Consider the following 383-residue polypeptide: Peroxisomal membrane protein PEX15 (383 aa).

Residues 1-331 lie on the Cytoplasmic side of the membrane; the sequence is MAASEIMNNL…AVLKHHFTRS (331 aa). The helical transmembrane segment at 332-349 threads the bilayer; it reads VLNKNGLLLTGLLLLLCL. Residues 350-383 are Lumenal-facing; it reads KKYKSLMAIFKHVPAAFHTVYPQIVGLLKLLASI.

In terms of assembly, interacts with PEX6. Interacts with PEX19; targets PEX15 to the peroxisome. Phosphorylated.

The protein resides in the peroxisome membrane. Its subcellular location is the endoplasmic reticulum membrane. In terms of biological role, peroxisomal docking factor that anchors PEX1 and PEX6 to peroxisome membranes. PEX26 is therefore required for the formation of the PEX1-PEX6 AAA ATPase complex, a complex that mediates the extraction of the PEX5 receptor from peroxisomal membrane. The protein is Peroxisomal membrane protein PEX15 (PEX15) of Saccharomyces cerevisiae (strain ATCC 204508 / S288c) (Baker's yeast).